The sequence spans 373 residues: G protein-coupled receptor 137Ba (373 aa).

Topologically, residues 1 to 15 are lumenal; that stretch reads MQKDSLPTLSPAVPP. Residues 16–36 form a helical membrane-spanning segment; it reads YVMLGLTVAYTIFYCLLFVFV. The Cytoplasmic portion of the chain corresponds to 37-55; sequence YVQLWLVLRYRHKRFSYQT. A helical transmembrane segment spans residues 56-76; sequence VFLFLCLLWAALRALLFSFYF. The Lumenal segment spans residues 77-84; it reads KNCVTANT. Residues 85 to 105 form a helical membrane-spanning segment; that stretch reads LGPFCFWLLYCFPVCLQFFTL. Residues 106–135 lie on the Cytoplasmic side of the membrane; that stretch reads SLMNLYFAQVIFKAKSKYSPELQKYRLPLY. The helical transmembrane segment at 136 to 156 threads the bilayer; that stretch reads LLFLSISLLFLLVNLTCALLV. Residues 157-176 are Lumenal-facing; it reads KINRANTETVVLVRVTVNDS. The helical transmembrane segment at 177 to 197 threads the bilayer; it reads LFVLCAVSLSLCLYRIAKMSL. At 198–213 the chain is on the cytoplasmic side; that stretch reads ANIYLEAKGTSVCQVT. The chain crosses the membrane as a helical span at residues 214-234; that stretch reads LIGVTVVLLYSSRACYNLVVL. The Lumenal portion of the chain corresponds to 235–268; sequence ALTKIKSINSFDYDWYNVSDQADLKSTLGDAGYV. The helical transmembrane segment at 269 to 289 threads the bilayer; it reads VFGVILFVWELLPTSLVVYFF. Residues 290-373 are Cytoplasmic-facing; it reads RVRKPTLDRS…HLAPEELNPY (84 aa).

The protein belongs to the GPR137 family.

It is found in the lysosome membrane. Functionally, lysosomal integral membrane protein that regulates the localization and activity of mTORC1, a signaling complex promoting cell growth in response to growth factors, energy levels, and amino acids. Interacts with Rag GTPases and increases the lysosomial localization and activity of Rag GTPases and thereby regulates mTORC1 translocation and activity in lysosome. Also acts as a negative regulator of osteoclast activity. May be involved in interleukin-4-induced M2 macrophage polarization. Its function is as follows. Also acts as a negative regulator of osteoclast activity. May be involved in interleukin-4-induced M2 macrophage polarization. The protein is G protein-coupled receptor 137Ba of Danio rerio (Zebrafish).